The following is a 102-amino-acid chain: Small ribosomal subunit protein uS10 (102 aa).

Belongs to the universal ribosomal protein uS10 family. As to quaternary structure, part of the 30S ribosomal subunit.

Functionally, involved in the binding of tRNA to the ribosomes. The polypeptide is Small ribosomal subunit protein uS10 (Thiobacillus denitrificans (strain ATCC 25259 / T1)).